The following is a 425-amino-acid chain: Secernin-2 (425 aa).

Cys12 is a catalytic residue. Phosphothreonine is present on Thr52.

This sequence belongs to the peptidase C69 family. Secernin subfamily.

The sequence is that of Secernin-2 (SCRN2) from Homo sapiens (Human).